The following is a 102-amino-acid chain: MNGQNIRIRLKAFDHRILDASTREIVSTAKRTGASVRGPVPLPTRIEKFTVNRSPHIDKKSREQFEMRTHKRLLDIVDPTPQTVDALMKLDLAAGVDVEIKL.

The protein belongs to the universal ribosomal protein uS10 family. In terms of assembly, part of the 30S ribosomal subunit.

Its function is as follows. Involved in the binding of tRNA to the ribosomes. This is Small ribosomal subunit protein uS10 from Rhizobium etli (strain CIAT 652).